The primary structure comprises 361 residues: Phenylalanine--tRNA ligase alpha subunit (361 aa).

Glutamate 260 contributes to the Mg(2+) binding site.

This sequence belongs to the class-II aminoacyl-tRNA synthetase family. Phe-tRNA synthetase alpha subunit type 1 subfamily. As to quaternary structure, tetramer of two alpha and two beta subunits. Mg(2+) is required as a cofactor.

The protein resides in the cytoplasm. The catalysed reaction is tRNA(Phe) + L-phenylalanine + ATP = L-phenylalanyl-tRNA(Phe) + AMP + diphosphate + H(+). The sequence is that of Phenylalanine--tRNA ligase alpha subunit from Bartonella henselae (strain ATCC 49882 / DSM 28221 / CCUG 30454 / Houston 1) (Rochalimaea henselae).